A 301-amino-acid chain; its full sequence is HTH-type transcriptional regulator EstR (301 aa).

One can recognise an HTH lysR-type domain in the interval 5 to 62 (PSLRQLSYLVTLSETLHFTEAARRSFVTQSTLSGGIMELERLLGGVLVERDRQNVRLT). A DNA-binding region (H-T-H motif) is located at residues 22–41 (FTEAARRSFVTQSTLSGGIM).

This sequence belongs to the LysR transcriptional regulatory family.

In terms of biological role, transcriptional regulator of the esterase operon. The polypeptide is HTH-type transcriptional regulator EstR (estR) (Acinetobacter baylyi (strain ATCC 33305 / BD413 / ADP1)).